Consider the following 102-residue polypeptide: Large ribosomal subunit protein bL21 (102 aa).

Belongs to the bacterial ribosomal protein bL21 family. Part of the 50S ribosomal subunit. Contacts protein L20.

Its function is as follows. This protein binds to 23S rRNA in the presence of protein L20. The protein is Large ribosomal subunit protein bL21 of Nitratiruptor sp. (strain SB155-2).